The following is a 63-amino-acid chain: SERF-like protein C1705.02 (63 aa).

Basic and acidic residues predominate over residues 1–13; sequence MSRGNQRDVDRAR. The tract at residues 1–63 is disordered; sequence MSRGNQRDVD…EANGGSKGKK (63 aa). Over residues 14–24 the composition is skewed to basic residues; that stretch reads NLKKSQASKKK. The span at 25–35 shows a compositional bias: basic and acidic residues; the sequence is QAGDPTKRLEA.

This sequence belongs to the SERF family.

The protein resides in the cytoplasm. It is found in the nucleus. It localises to the nucleolus. The sequence is that of SERF-like protein C1705.02 from Schizosaccharomyces pombe (strain 972 / ATCC 24843) (Fission yeast).